A 540-amino-acid chain; its full sequence is Glucose-6-phosphate isomerase (540 aa).

E346 serves as the catalytic Proton donor. Residues H377 and K505 contribute to the active site.

The protein belongs to the GPI family.

Its subcellular location is the cytoplasm. The enzyme catalyses alpha-D-glucose 6-phosphate = beta-D-fructose 6-phosphate. The protein operates within carbohydrate biosynthesis; gluconeogenesis. Its pathway is carbohydrate degradation; glycolysis; D-glyceraldehyde 3-phosphate and glycerone phosphate from D-glucose: step 2/4. In terms of biological role, catalyzes the reversible isomerization of glucose-6-phosphate to fructose-6-phosphate. The sequence is that of Glucose-6-phosphate isomerase from Francisella tularensis subsp. tularensis (strain SCHU S4 / Schu 4).